The chain runs to 938 residues: Isoleucine--tRNA ligase (938 aa).

Positions 58–68 (PYANGSIHIGH) match the 'HIGH' region motif. Glu561 contributes to the L-isoleucyl-5'-AMP binding site. Residues 602 to 606 (KMSKS) carry the 'KMSKS' region motif. Lys605 serves as a coordination point for ATP. Zn(2+) contacts are provided by Cys901, Cys904, Cys921, and Cys924.

It belongs to the class-I aminoacyl-tRNA synthetase family. IleS type 1 subfamily. In terms of assembly, monomer. Zn(2+) serves as cofactor.

It localises to the cytoplasm. The catalysed reaction is tRNA(Ile) + L-isoleucine + ATP = L-isoleucyl-tRNA(Ile) + AMP + diphosphate. In terms of biological role, catalyzes the attachment of isoleucine to tRNA(Ile). As IleRS can inadvertently accommodate and process structurally similar amino acids such as valine, to avoid such errors it has two additional distinct tRNA(Ile)-dependent editing activities. One activity is designated as 'pretransfer' editing and involves the hydrolysis of activated Val-AMP. The other activity is designated 'posttransfer' editing and involves deacylation of mischarged Val-tRNA(Ile). The sequence is that of Isoleucine--tRNA ligase from Sodalis glossinidius (strain morsitans).